A 402-amino-acid polypeptide reads, in one-letter code: Thyroid hormone receptor alpha (402 aa).

A disordered region spans residues 1-22 (MEQKPSTLDPLSEPEDTRWLDG). The modulating stretch occupies residues 1–50 (MEQKPSTLDPLSEPEDTRWLDGKRKRKSSQCLVKSSMSGYIPSYLDKDEQ). Serine 12 carries the post-translational modification Phosphoserine; by CK2. Phosphoserine is present on serine 28. Positions 51, 54, 68, 71, 89, 95, 105, and 108 each coordinate Zn(2+). 2 consecutive NR C4-type zinc fingers follow at residues 51-71 (CVVC…CEGC) and 89-113 (CKYD…FKKC). A DNA-binding region (nuclear receptor) is located at residues 51-125 (CVVCGDKATG…VGMAMDLVLD (75 aa)). The NR LBD domain occupies 161–402 (EEWELIHVVT…ELFPPLFLEV (242 aa)). Residues arginine 226 and serine 275 each contribute to the 3,3',5-triiodo-L-thyronine site.

It belongs to the nuclear hormone receptor family. NR1 subfamily. As to quaternary structure, probably interacts with SFPQ.

The protein resides in the nucleus. Nuclear hormone receptor that can act as a repressor or activator of transcription. High affinity receptor for thyroid hormones, including triiodothyronine and thyroxine. This chain is Thyroid hormone receptor alpha (THRA), found in Aptenodytes patagonicus (King penguin).